The primary structure comprises 274 residues: Energy-coupling factor transporter ATP-binding protein EcfA1 (274 aa).

The region spanning 11–245 (IELKNVKFKY…ERVIEIAKID (235 aa)) is the ABC transporter domain. Position 45-52 (45-52 (GHNGSGKS)) interacts with ATP.

Belongs to the ABC transporter superfamily. Energy-coupling factor EcfA family. Forms a stable energy-coupling factor (ECF) transporter complex composed of 2 membrane-embedded substrate-binding proteins (S component), 2 ATP-binding proteins (A component) and 2 transmembrane proteins (T component).

It is found in the cell membrane. In terms of biological role, ATP-binding (A) component of a common energy-coupling factor (ECF) ABC-transporter complex. Unlike classic ABC transporters this ECF transporter provides the energy necessary to transport a number of different substrates. The polypeptide is Energy-coupling factor transporter ATP-binding protein EcfA1 (Mycoplasma mobile (strain ATCC 43663 / 163K / NCTC 11711) (Mesomycoplasma mobile)).